A 250-amino-acid polypeptide reads, in one-letter code: Phosphoribosylaminoimidazole-succinocarboxamide synthase (250 aa).

It belongs to the SAICAR synthetase family.

The enzyme catalyses 5-amino-1-(5-phospho-D-ribosyl)imidazole-4-carboxylate + L-aspartate + ATP = (2S)-2-[5-amino-1-(5-phospho-beta-D-ribosyl)imidazole-4-carboxamido]succinate + ADP + phosphate + 2 H(+). It functions in the pathway purine metabolism; IMP biosynthesis via de novo pathway; 5-amino-1-(5-phospho-D-ribosyl)imidazole-4-carboxamide from 5-amino-1-(5-phospho-D-ribosyl)imidazole-4-carboxylate: step 1/2. The polypeptide is Phosphoribosylaminoimidazole-succinocarboxamide synthase (Chloroflexus aggregans (strain MD-66 / DSM 9485)).